A 117-amino-acid polypeptide reads, in one-letter code: Anti-sigma F factor antagonist (117 aa).

The STAS domain maps to 2–115 (HFQLEMVTRE…QAIDRVRGIV (114 aa)). The residue at position 58 (Ser-58) is a Phosphoserine.

It belongs to the anti-sigma-factor antagonist family. Post-translationally, phosphorylated by SpoIIAB on a serine residue.

Its function is as follows. In the phosphorylated form it could act as an anti-anti-sigma factor that counteracts SpoIIAB and thus releases sigma f from inhibition. In Lysinibacillus sphaericus (Bacillus sphaericus), this protein is Anti-sigma F factor antagonist (spoIIAA).